The primary structure comprises 348 residues: MLTRLKAKSEGKLAKQLCRVVLDQFDKQYSKELGDSWSTVRDVLISPSLWQYAILFNRFNYPFELEKALHLRGYHTVLQGALPHYPKSMKCYLSRTPDRMPSERHQTGSLKKYYLLNAASLLPVLALELRDGEAVLDLCAAPGGKSVALLQCAYPGYLLCNEYDRPRGRWLRQTLESFIPQPLINVIKVSELDGREMGDAQPATFDKVLVDAPCSNDRSWLFSSDSQKAAYRIHQRKNLPVLQVELVRSAIKALRPGGLLVYSTCTLSKAENQDVISEVLTSDSNIVPVDISGIARTFSQDFTFAPTDQKCSLLVIPEKGKAWGPMYIAKLKKGMSTRKRQGEFCKPC.

Residues 139-145, glutamate 162, aspartate 193, and aspartate 211 contribute to the S-adenosyl-L-methionine site; that span reads CAAPGGK. Cysteine 265 functions as the Nucleophile in the catalytic mechanism.

It belongs to the class I-like SAM-binding methyltransferase superfamily. RsmB/NOP family.

Its subcellular location is the mitochondrion matrix. It carries out the reaction cytidine(34) in mitochondrial tRNA + S-adenosyl-L-methionine = 5-methylcytidine(34) in mitochondrial tRNA + S-adenosyl-L-homocysteine + H(+). Its function is as follows. Mitochondrial tRNA methyltransferase that mediates methylation of cytosine to 5-methylcytosine (m5C) at position 34 of mt-tRNA(Met). mt-tRNA(Met) methylation at cytosine(34) takes place at the wobble position of the anticodon and initiates the formation of 5-formylcytosine (f(5)c) at this position. mt-tRNA(Met) containing the f(5)c modification at the wobble position enables recognition of the AUA codon in addition to the AUG codon, expanding codon recognition in mitochondrial translation. The polypeptide is tRNA (cytosine(34)-C(5))-methyltransferase, mitochondrial (Mus musculus (Mouse)).